The primary structure comprises 81 residues: ATP synthase subunit c, chloroplastic (81 aa).

2 helical membrane passes run 3-23 and 57-77; these read PLISAASVIAAGLAVGLASIG and LAFMEALSIYGLVVALALLFA.

Belongs to the ATPase C chain family. F-type ATPases have 2 components, F(1) - the catalytic core - and F(0) - the membrane proton channel. F(1) has five subunits: alpha(3), beta(3), gamma(1), delta(1), epsilon(1). F(0) has four main subunits: a(1), b(1), b'(1) and c(10-14). The alpha and beta chains form an alternating ring which encloses part of the gamma chain. F(1) is attached to F(0) by a central stalk formed by the gamma and epsilon chains, while a peripheral stalk is formed by the delta, b and b' chains.

Its subcellular location is the plastid. The protein localises to the chloroplast thylakoid membrane. Its function is as follows. F(1)F(0) ATP synthase produces ATP from ADP in the presence of a proton or sodium gradient. F-type ATPases consist of two structural domains, F(1) containing the extramembraneous catalytic core and F(0) containing the membrane proton channel, linked together by a central stalk and a peripheral stalk. During catalysis, ATP synthesis in the catalytic domain of F(1) is coupled via a rotary mechanism of the central stalk subunits to proton translocation. In terms of biological role, key component of the F(0) channel; it plays a direct role in translocation across the membrane. A homomeric c-ring of between 10-14 subunits forms the central stalk rotor element with the F(1) delta and epsilon subunits. The polypeptide is ATP synthase subunit c, chloroplastic (Gossypium barbadense (Sea Island cotton)).